A 426-amino-acid polypeptide reads, in one-letter code: Histidine--tRNA ligase (426 aa).

The protein belongs to the class-II aminoacyl-tRNA synthetase family.

It localises to the cytoplasm. It catalyses the reaction tRNA(His) + L-histidine + ATP = L-histidyl-tRNA(His) + AMP + diphosphate + H(+). This is Histidine--tRNA ligase from Saccharolobus solfataricus (strain ATCC 35092 / DSM 1617 / JCM 11322 / P2) (Sulfolobus solfataricus).